Here is a 271-residue protein sequence, read N- to C-terminus: 39kDa core protein OPG130 (271 aa).

Disordered stretches follow at residues 80–101 and 140–180; these read PLQVPTPAPTPKPRQQQTNTSS and KDQK…TPPQ. Positions 92-101 are enriched in polar residues; it reads PRQQQTNTSS. The span at 144 to 165 shows a compositional bias: low complexity; it reads TTTTPSTQPSQTLPTTTCTQQS.

Belongs to the orthopoxvirus OPG130 family. Interacts with OPG136 and its cleaved form. Post-translationally, its phosphorylation state is regulated by the OPG054 kinase and the OPG106 phosphatase.

The protein localises to the virion. Its subcellular location is the host endoplasmic reticulum-Golgi intermediate compartment membrane. Component of the virion core. Participates in virion assembly. The chain is 39kDa core protein OPG130 (OPG130) from Homo sapiens (Human).